The following is a 532-amino-acid chain: FAD-dependent monooxygenase hkm7 (532 aa).

FAD-binding positions include 191-193 (RIY) and Asp-261.

This sequence belongs to the PheA/TfdB FAD monooxygenase family.

Its pathway is secondary metabolite biosynthesis. Functionally, FAD-dependent monooxygenase; part of the gene cluster that mediates the biosynthesis of hancockiamides, an unusual new family of N-cinnamoylated piperazines. The NRPS hkm10 and the NmrA-like reductase hkm9 are proposed to convert two molecules of L-Phe to the intermediary piperazine called xenocockiamide A. Xenocockiamide A is then converted to hancockiamide D via a series of hydroxylations and O-methylations. The tyrosinase hkm6 may catalyze an aromatic hydroxylation, then the 2-oxoglutarate-dependent Fe(II) dioxygenase hkm4 and the FAD-dependent phenol hydroxylase hkm7 may catalyze consecutive hydroxylations to install 2 more hydroxy groups, and the methyltransferase hkm8 probably catalyzes two methylations using 2 molecules of S-adenosyl-L-methionine (SAM). The NRPS hkm11 activates and transfers trans-cinnamate supplied by the PAL hkm12 to hancockiamide D and produces hancockiamide A. NRPS Hkm11 has the flexibility to tolerate the bulky hancockiamide G as a substrate and the absence of the acetyl-transferase hkm3 opens up the opportunity for hkm11 to introduce a second N-cinnamoyl moiety. The cytochrome P450 monooxygenase hkm5 catalyzes the methylenedioxy bridge formation, converting hancockiamide A into hancockiamide G. Hkm5 can also convert hancockiamide B into hancockiamide C, and hancockiamide D into hancockiamide H. The N-acetyltransferase hkm3 finally transfers an acetyl group to 1-N of piperazine, converting hancockiamide A into hancockiamide B and hancockiamide G into hancockiamide C. The sequence is that of FAD-dependent monooxygenase hkm7 from Aspergillus hancockii.